We begin with the raw amino-acid sequence, 302 residues long: Probable lipid kinase YegS-like (302 aa).

Residues 1 to 129 (MDKDKVLLVL…IDLGAVNGKL (129 aa)) form the DAGKc domain. ATP-binding positions include threonine 39, 65 to 71 (GDGTLRE), and threonine 92. Residues arginine 210, aspartate 213, and leucine 215 each contribute to the Mg(2+) site. Glutamate 268 functions as the Proton acceptor in the catalytic mechanism.

The protein belongs to the diacylglycerol/lipid kinase family. YegS lipid kinase subfamily. Mg(2+) serves as cofactor. It depends on Ca(2+) as a cofactor.

Its subcellular location is the cytoplasm. Its function is as follows. Probably phosphorylates lipids; the in vivo substrate is unknown. This Pseudomonas aeruginosa (strain UCBPP-PA14) protein is Probable lipid kinase YegS-like.